The chain runs to 113 residues: Mitochondrial import inner membrane translocase subunit PAM16 like 1 (113 aa).

The transit peptide at 1 to 48 (MAARVLASVIVMGSGIIARACTQAYRQALANASKTGVAHEATQTIKRG) directs the protein to the mitochondrion. The interval 55–104 (EARQILGVTEKSSWDEILKKYDTLFERNAQNGSFYLQSKVHRAKECLETA) is J-like.

The protein belongs to the TIM16/PAM16 family. In terms of tissue distribution, expressed at low levels in seedlings, rosettes and inflorescence.

It is found in the mitochondrion inner membrane. Its function is as follows. Regulates ATP-dependent protein translocation into the mitochondrial matrix. The polypeptide is Mitochondrial import inner membrane translocase subunit PAM16 like 1 (Arabidopsis thaliana (Mouse-ear cress)).